The sequence spans 117 residues: Large ribosomal subunit protein bL20c (117 aa).

This sequence belongs to the bacterial ribosomal protein bL20 family.

The protein resides in the plastid. The protein localises to the chloroplast. Functionally, binds directly to 23S ribosomal RNA and is necessary for the in vitro assembly process of the 50S ribosomal subunit. It is not involved in the protein synthesizing functions of that subunit. The protein is Large ribosomal subunit protein bL20c of Barbarea verna (Land cress).